The sequence spans 30 residues: Neurotoxin II.22.5 (30 aa).

Residues 1-30 (KEGYIVNYHTGCKYTCAKLGDNDYCLRECK) form the LCN-type CS-alpha/beta domain.

Belongs to the long (4 C-C) scorpion toxin superfamily. Sodium channel inhibitor family. Beta subfamily. As to expression, expressed by the venom gland.

The protein localises to the secreted. Its function is as follows. Binds to sodium channels (Nav) and inhibits the inactivation of the activated channels, thereby blocking neuronal transmission. The polypeptide is Neurotoxin II.22.5 (Centruroides tecomanus (Scorpion)).